A 1029-amino-acid polypeptide reads, in one-letter code: U2 snRNP-associated SURP motif-containing protein (1029 aa).

Disordered regions lie at residues 1–111 and 141–274; these read MADK…EDEK and VNAA…PSTT. Alanine 2 is modified (N-acetylalanine). Residues 7 to 16 are compositionally biased toward polar residues; it reads GGSQKASSKT. Positions 45 to 54 are enriched in basic residues; the sequence is TRPKSPRKHN. The span at 55 to 64 shows a compositional bias: basic and acidic residues; it reads YRNESARESL. At serine 67 the chain carries Phosphoserine. Residue lysine 80 forms a Glycyl lysine isopeptide (Lys-Gly) (interchain with G-Cter in SUMO2) linkage. Residues 92–121 adopt a coiled-coil conformation; it reads AKRTLSKKEQEELKKKEDEKAAAEIYEEFL. Basic and acidic residues-rich tracts occupy residues 97 to 111 and 144 to 155; these read SKKE…EDEK and AKEEHETDEKRG. Residues lysine 145 and lysine 168 each participate in a glycyl lysine isopeptide (Lys-Gly) (interchain with G-Cter in SUMO2) cross-link. Residues 169 to 178 show a composition bias toward polar residues; that stretch reads NPPNQSSNER. Over residues 186 to 222 the composition is skewed to basic and acidic residues; the sequence is ETKKPPLKKGEKEKKKSNLELFKEELKQIQEERDERH. Residues 192–232 adopt a coiled-coil conformation; it reads LKKGEKEKKKSNLELFKEELKQIQEERDERHKTKGRLSRFE. Serine 202 carries the phosphoserine modification. Lysine 208 participates in a covalent cross-link: Glycyl lysine isopeptide (Lys-Gly) (interchain with G-Cter in SUMO2). At serine 236 the chain carries Phosphoserine. Residues 239–249 are compositionally biased toward basic and acidic residues; it reads DGQRRSMDAPS. In terms of domain architecture, RRM spans 274-355; it reads TNLYLGNINP…FEMKLGWGKA (82 aa). An SURP motif repeat occupies 430–473; that stretch reads LIHRMIEFVVREGPMFEAMIMNREINNPMFRFLFENQTPAHVYY. At serine 485 the chain carries Phosphoserine. Positions 534–679 constitute a CID domain; that stretch reads LKEEQRDKLE…KLQNIFLGLV (146 aa). Threonine 719 is modified (phosphothreonine). Residues lysine 748 and lysine 749 each participate in a glycyl lysine isopeptide (Lys-Gly) (interchain with G-Cter in SUMO2) cross-link. N6-acetyllysine; alternate is present on lysine 760. Lysine 760 participates in a covalent cross-link: Glycyl lysine isopeptide (Lys-Gly) (interchain with G-Cter in SUMO2); alternate. Disordered stretches follow at residues 778 to 841 and 855 to 1029; these read KWEL…EEKR and QDEL…KNKH. Acidic residues predominate over residues 786–806; sequence EESEEEENQNQEEESEDEEDT. 3 positions are modified to phosphoserine: serine 788, serine 800, and serine 811. 2 stretches are compositionally biased toward basic and acidic residues: residues 810 to 841 and 874 to 922; these read KSEE…EEKR and QVEH…TPTR. Residues lysine 822, lysine 829, and lysine 832 each participate in a glycyl lysine isopeptide (Lys-Gly) (interchain with G-Cter in SUMO2) cross-link. Positions 837 to 915 form a coiled coil; sequence SEEKRAKLRE…ESRSKDKKEK (79 aa). Threonine 931 is subject to Phosphothreonine. A phosphoserine mark is found at serine 946 and serine 948. The span at 950 to 980 shows a compositional bias: basic and acidic residues; sequence KSERSERSERSHKESSRSRSSHKDSPRDVSK. A compositionally biased stretch (basic residues) spans 991–1029; sequence TPKRSRRSRSRSPKKSGKKSRSQSRSPHRSHKKSKKNKH.

The protein belongs to the splicing factor SR family. As to quaternary structure, interacts with ERBB4.

Its subcellular location is the nucleus. The sequence is that of U2 snRNP-associated SURP motif-containing protein (U2SURP) from Homo sapiens (Human).